A 641-amino-acid chain; its full sequence is Mannosyl-oligosaccharide 1,2-alpha-mannosidase IB (641 aa).

N-acetylthreonine is present on threonine 2. The Cytoplasmic segment spans residues 2-36 (TTPALLPLSGRRIPPLNLGPPSFPHHRATLRLSEK). The helical; Signal-anchor for type II membrane protein transmembrane segment at 37–57 (FILLLILSAFITLCFGAFFFL) threads the bilayer. The Lumenal portion of the chain corresponds to 58–641 (PDSSKHKRFD…STLSGNPAVR (584 aa)). A disulfide bridge links cysteine 462 with cysteine 494. Glutamate 508 (proton donor) is an active-site residue. A Ca(2+)-binding site is contributed by threonine 619. The N-linked (GlcNAc...) asparagine glycan is linked to asparagine 631.

The protein belongs to the glycosyl hydrolase 47 family. The cofactor is Ca(2+).

The protein localises to the golgi apparatus membrane. The enzyme catalyses N(4)-(alpha-D-Man-(1-&gt;2)-alpha-D-Man-(1-&gt;2)-alpha-D-Man-(1-&gt;3)-[alpha-D-Man-(1-&gt;2)-alpha-D-Man-(1-&gt;3)-[alpha-D-Man-(1-&gt;2)-alpha-D-Man-(1-&gt;6)]-alpha-D-Man-(1-&gt;6)]-beta-D-Man-(1-&gt;4)-beta-D-GlcNAc-(1-&gt;4)-beta-D-GlcNAc)-L-asparaginyl-[protein] (N-glucan mannose isomer 9A1,2,3B1,2,3) + 4 H2O = N(4)-(alpha-D-Man-(1-&gt;3)-[alpha-D-Man-(1-&gt;3)-[alpha-D-Man-(1-&gt;6)]-alpha-D-Man-(1-&gt;6)]-beta-D-Man-(1-&gt;4)-beta-D-GlcNAc-(1-&gt;4)-beta-D-GlcNAc)-L-asparaginyl-[protein] (N-glucan mannose isomer 5A1,2) + 4 beta-D-mannose. The catalysed reaction is N(4)-(alpha-D-Man-(1-&gt;2)-alpha-D-Man-(1-&gt;2)-alpha-D-Man-(1-&gt;3)-[alpha-D-Man-(1-&gt;3)-[alpha-D-Man-(1-&gt;2)-alpha-D-Man-(1-&gt;6)]-alpha-D-Man-(1-&gt;6)]-beta-D-Man-(1-&gt;4)-beta-D-GlcNAc-(1-&gt;4)-beta-D-GlcNAc)-L-asparaginyl-[protein] (N-glucan mannose isomer 8A1,2,3B1,3) + 3 H2O = N(4)-(alpha-D-Man-(1-&gt;3)-[alpha-D-Man-(1-&gt;3)-[alpha-D-Man-(1-&gt;6)]-alpha-D-Man-(1-&gt;6)]-beta-D-Man-(1-&gt;4)-beta-D-GlcNAc-(1-&gt;4)-beta-D-GlcNAc)-L-asparaginyl-[protein] (N-glucan mannose isomer 5A1,2) + 3 beta-D-mannose. Its pathway is protein modification; protein glycosylation. Its activity is regulated as follows. Inhibited by both 1-deoxymannojirimycin and kifunensine. In terms of biological role, involved in the maturation of Asn-linked oligosaccharides. Progressively trim alpha-1,2-linked mannose residues from Man(9)GlcNAc(2) to produce Man(5)GlcNAc(2). The polypeptide is Mannosyl-oligosaccharide 1,2-alpha-mannosidase IB (Man1a2) (Mus musculus (Mouse)).